Reading from the N-terminus, the 440-residue chain is Chromosome partition protein MukF (440 aa).

A leucine-zipper region spans residues 208 to 236 (LSETSGTLRELQDTLEAAGDKLQANLLRI).

It belongs to the MukF family. As to quaternary structure, interacts, and probably forms a ternary complex, with MukE and MukB via its C-terminal region. The complex formation is stimulated by calcium or magnesium. It is required for an interaction between MukE and MukB.

Its subcellular location is the cytoplasm. The protein resides in the nucleoid. Its function is as follows. Involved in chromosome condensation, segregation and cell cycle progression. May participate in facilitating chromosome segregation by condensation DNA from both sides of a centrally located replisome during cell division. Not required for mini-F plasmid partitioning. Probably acts via its interaction with MukB and MukE. Overexpression results in anucleate cells. It has a calcium binding activity. This chain is Chromosome partition protein MukF, found in Photorhabdus laumondii subsp. laumondii (strain DSM 15139 / CIP 105565 / TT01) (Photorhabdus luminescens subsp. laumondii).